Consider the following 478-residue polypeptide: E3 ubiquitin-protein ligase makorin-1 (478 aa).

C3H1-type zinc fingers lie at residues 51 to 78 (WTKQ…HDLS), 80 to 107 (SQSA…HTKP), and 204 to 231 (EMKK…HGDA). Residues 232 to 259 (CDMCGLQVLHPVDAAQRSQHIKSCIEAH) form a makorin-type Cys-His region. The RING-type zinc-finger motif lies at 277 to 331 (CGICMEVVYEKANPSERRFGILSNCNHTYCLKCIRKWRSAKQFESKIIKSCPECR). Residues 360-389 (AMSNKPCRYFDEGRGSCPFGGNCFYKHAYP) form a C3H1-type 4 zinc finger.

Interacts with p53/TP53 and CDKN1A. Interacts with TERT, modulating telomere length homeostasis. Post-translationally, auto-ubiquitinated; which leads to proteasomal degradation.

The catalysed reaction is S-ubiquitinyl-[E2 ubiquitin-conjugating enzyme]-L-cysteine + [acceptor protein]-L-lysine = [E2 ubiquitin-conjugating enzyme]-L-cysteine + N(6)-ubiquitinyl-[acceptor protein]-L-lysine.. It functions in the pathway protein modification; protein ubiquitination. E3 ubiquitin ligase catalyzing the covalent attachment of ubiquitin moieties onto substrate proteins. These substrates include FILIP1, p53/TP53, CDKN1A and TERT. Keeps cells alive by suppressing p53/TP53 under normal conditions, but stimulates apoptosis by repressing CDKN1A under stress conditions. Acts as a negative regulator of telomerase. Has negative and positive effects on RNA polymerase II-dependent transcription. This is E3 ubiquitin-protein ligase makorin-1 (MKRN1) from Notamacropus eugenii (Tammar wallaby).